A 107-amino-acid chain; its full sequence is Putative double-stranded DNA mimic protein Spro_2690 (107 aa).

The protein belongs to the putative dsDNA mimic protein family.

In terms of biological role, may act as a double-stranded DNA (dsDNA) mimic. Probably regulates the activity of a dsDNA-binding protein. In Serratia proteamaculans (strain 568), this protein is Putative double-stranded DNA mimic protein Spro_2690.